Here is a 708-residue protein sequence, read N- to C-terminus: Ion-translocating oxidoreductase complex subunit C (708 aa).

4Fe-4S ferredoxin-type domains lie at 369–397 (GEPQEEQSCIRCSACADACPADLLPQQLY) and 407–436 (KATTHNIADCIECGACAWVCPSNIPLVQYF). [4Fe-4S] cluster is bound by residues C377, C380, C383, C387, C416, C419, C422, and C426. The segment at 599 to 686 (KARKLEQQQS…EEQVDPRKAA (88 aa)) is disordered.

It belongs to the 4Fe4S bacterial-type ferredoxin family. RnfC subfamily. In terms of assembly, the complex is composed of six subunits: RsxA, RsxB, RsxC, RsxD, RsxE and RsxG. It depends on [4Fe-4S] cluster as a cofactor.

The protein resides in the cell inner membrane. Its function is as follows. Part of a membrane-bound complex that couples electron transfer with translocation of ions across the membrane. Required to maintain the reduced state of SoxR. In Escherichia coli (strain 55989 / EAEC), this protein is Ion-translocating oxidoreductase complex subunit C.